A 328-amino-acid polypeptide reads, in one-letter code: Nickel import system permease protein NikB (328 aa).

6 helical membrane-spanning segments follow: residues 11-31 (LIQM…LMKL), 104-124 (LLIS…LGII), 139-159 (VIST…LLFI), 170-190 (ILSQ…AYII), 229-249 (ILPI…GTVV), and 279-299 (VLFI…LTLL). The ABC transmembrane type-1 domain occupies 100-297 (APITLLISFS…IINTIADLLT (198 aa)).

The protein belongs to the binding-protein-dependent transport system permease family. OppBC subfamily. As to quaternary structure, the complex is composed of two ATP-binding proteins (NikD and NikE), two transmembrane proteins (NikB and NikC) and a solute-binding protein (NikA).

Its subcellular location is the cell membrane. Its function is as follows. Part of the ABC transporter complex NikABCDE (Opp2) involved in nickel import. Probably responsible for the translocation of the substrate across the membrane. The polypeptide is Nickel import system permease protein NikB (Staphylococcus aureus (strain MRSA252)).